The chain runs to 429 residues: TNFAIP3-interacting protein 2 (429 aa).

The residue at position 7 (S7) is a Phosphoserine. The stretch at 29 to 117 (QRLRRLQDQL…MQQLLSQPQH (89 aa)) forms a coiled coil. Positions 177–195 (HAQRNVGERSPDQSEHTDG) are enriched in basic and acidic residues. Positions 177 to 199 (HAQRNVGERSPDQSEHTDGHTSV) are disordered. 2 coiled-coil regions span residues 196–226 (HTSV…LNAK) and 255–340 (ELMR…QVSW). Residues 289-347 (RDAALERVQMLEQQILAYKDDFMSERADRERAQSRIQELEEKVASLLHQVSWRQDSREP) form a ubiquitin-binding domain (UBD) region. The tract at residues 372-400 (PGGWRPGTGSQQPEPPAEGGHPGAAQRGQ) is disordered. The segment covering 388 to 397 (AEGGHPGAAQ) has biased composition (low complexity). The segment at 397 to 429 (QRGQGDLQCPHCLQCFSDEQGEELLRHVAECCQ) adopts a CCHC NOA-type zinc-finger fold. Positions 405, 408, 423, and 427 each coordinate Zn(2+).

As to quaternary structure, interacts with STK11/LKB1, TNFAIP3, IKBKG, NFKB1, MAP3K8, TEK, RIPK1, CHUK, IKBKB and SMARCD1. Interacts with polyubiquitin. (Microbial infection) Interacts with severe fever with thrombocytopenia syndrome virus (SFTSV) NSs; this interaction promotes TPL2 complex formation and signaling activity leading to IL-10 production. In vitro phosphorylated by CHUK. Post-translationally, ubiquitinated; undergoes 'Lys-48'-linked polyubiquitination probably leading to constitutive proteasomal degradation which can be impaired by IKK-A/CHUK or IKBKB probably involving deubiquitination. Deubiquitinated by USP35; leading to stabilization and inhibition of TNFalpha-induced NF-kappa-B activation. Ubiquitously expressed in all tissues examined.

The protein resides in the cytoplasm. Its subcellular location is the nucleus. In terms of biological role, inhibits NF-kappa-B activation by blocking the interaction of RIPK1 with its downstream effector NEMO/IKBKG. Forms a ternary complex with NFKB1 and MAP3K8 but appears to function upstream of MAP3K8 in the TLR4 signaling pathway that regulates MAP3K8 activation. Involved in activation of the MEK/ERK signaling pathway during innate immune response; this function seems to be stimulus- and cell type specific. Required for stability of MAP3K8. Involved in regulation of apoptosis in endothelial cells; promotes TEK agonist-stimulated endothelial survival. May act as transcriptional coactivator when translocated to the nucleus. Enhances CHUK-mediated NF-kappa-B activation involving NF-kappa-B p50-p65 and p50-c-Rel complexes. The polypeptide is TNFAIP3-interacting protein 2 (Homo sapiens (Human)).